We begin with the raw amino-acid sequence, 549 residues long: Probable protein kinase UbiB (549 aa).

Residues 123 to 501 (NFDDTPLASA…QQKAHKSNYL (379 aa)) enclose the Protein kinase domain. ATP is bound by residues 129–137 (LASASISQV) and lysine 152. The active-site Proton acceptor is the aspartate 287. 2 helical membrane passes run 498–518 (SNYL…LFSQ) and 520–540 (ATLW…LLGW).

This sequence belongs to the ABC1 family. UbiB subfamily.

The protein localises to the cell inner membrane. Its pathway is cofactor biosynthesis; ubiquinone biosynthesis [regulation]. In terms of biological role, is probably a protein kinase regulator of UbiI activity which is involved in aerobic coenzyme Q (ubiquinone) biosynthesis. The sequence is that of Probable protein kinase UbiB from Shewanella loihica (strain ATCC BAA-1088 / PV-4).